We begin with the raw amino-acid sequence, 346 residues long: Putative [LysW]-L-2-aminoadipate/[LysW]-L-glutamate phosphate reductase (346 aa).

12 to 15 (SGFT) is an NADP(+) binding site. Residue Cys-147 is part of the active site. The tract at residues 178–198 (GSSEGGAGGGDASSHPERSGV) is disordered. Residue Asn-310 coordinates NADP(+).

This sequence belongs to the NAGSA dehydrogenase family. Type 1 subfamily. LysY sub-subfamily.

It localises to the cytoplasm. It catalyses the reaction [amino-group carrier protein]-C-terminal-N-(1-carboxy-5-oxopentan-1-yl)-L-glutamine + phosphate + NADP(+) = [amino-group carrier protein]-C-terminal-N-(1-carboxy-5-phosphooxy-5-oxopentan-1-yl)-L-glutamine + NADPH + H(+). The enzyme catalyses [amino-group carrier protein]-C-terminal-gamma-(L-glutamyl-5-semialdehyde)-L-glutamate + phosphate + NADP(+) = [amino-group carrier protein]-C-terminal-gamma-(5-phospho-L-glutamyl)-L-glutamate + NADPH + H(+). It participates in amino-acid biosynthesis; L-lysine biosynthesis via AAA pathway; L-lysine from L-alpha-aminoadipate (Thermus route): step 3/5. It functions in the pathway amino-acid biosynthesis; L-arginine biosynthesis. In terms of biological role, involved in both the arginine and lysine biosynthetic pathways. This is Putative [LysW]-L-2-aminoadipate/[LysW]-L-glutamate phosphate reductase from Haloquadratum walsbyi (strain DSM 16790 / HBSQ001).